A 420-amino-acid polypeptide reads, in one-letter code: Serine hydroxymethyltransferase (420 aa).

(6S)-5,6,7,8-tetrahydrofolate contacts are provided by residues Leu-121 and 125–127 (GHL). Residue Lys-230 is modified to N6-(pyridoxal phosphate)lysine. (6S)-5,6,7,8-tetrahydrofolate contacts are provided by residues Glu-246 and 354 to 356 (SPF).

This sequence belongs to the SHMT family. As to quaternary structure, homodimer. Pyridoxal 5'-phosphate serves as cofactor.

Its subcellular location is the cytoplasm. The catalysed reaction is (6R)-5,10-methylene-5,6,7,8-tetrahydrofolate + glycine + H2O = (6S)-5,6,7,8-tetrahydrofolate + L-serine. Its pathway is one-carbon metabolism; tetrahydrofolate interconversion. It functions in the pathway amino-acid biosynthesis; glycine biosynthesis; glycine from L-serine: step 1/1. In terms of biological role, catalyzes the reversible interconversion of serine and glycine with tetrahydrofolate (THF) serving as the one-carbon carrier. This reaction serves as the major source of one-carbon groups required for the biosynthesis of purines, thymidylate, methionine, and other important biomolecules. Also exhibits THF-independent aldolase activity toward beta-hydroxyamino acids, producing glycine and aldehydes, via a retro-aldol mechanism. The protein is Serine hydroxymethyltransferase of Rickettsia peacockii (strain Rustic).